A 498-amino-acid chain; its full sequence is ATP synthase subunit beta, chloroplastic (498 aa).

Position 172-179 (172-179 (GGAGVGKT)) interacts with ATP.

Belongs to the ATPase alpha/beta chains family. F-type ATPases have 2 components, CF(1) - the catalytic core - and CF(0) - the membrane proton channel. CF(1) has five subunits: alpha(3), beta(3), gamma(1), delta(1), epsilon(1). CF(0) has four main subunits: a(1), b(1), b'(1) and c(9-12).

It localises to the plastid. It is found in the chloroplast thylakoid membrane. The enzyme catalyses ATP + H2O + 4 H(+)(in) = ADP + phosphate + 5 H(+)(out). Functionally, produces ATP from ADP in the presence of a proton gradient across the membrane. The catalytic sites are hosted primarily by the beta subunits. In Cinnamomum camphora (Camphor tree), this protein is ATP synthase subunit beta, chloroplastic.